Reading from the N-terminus, the 406-residue chain is Enoyl-[acyl-carrier-protein] reductase [NADH] (406 aa).

Residues 48-53 (GASTGF), 74-75 (FE), 111-112 (DA), and 140-141 (IA) contribute to the NAD(+) site. Tyr-226 lines the substrate pocket. The Proton donor role is filled by Tyr-236. NAD(+)-binding positions include Lys-245 and 275–277 (LVT).

Belongs to the TER reductase family. As to quaternary structure, monomer.

It catalyses the reaction a 2,3-saturated acyl-[ACP] + NAD(+) = a (2E)-enoyl-[ACP] + NADH + H(+). The protein operates within lipid metabolism; fatty acid biosynthesis. Its function is as follows. Involved in the final reduction of the elongation cycle of fatty acid synthesis (FAS II). Catalyzes the reduction of a carbon-carbon double bond in an enoyl moiety that is covalently linked to an acyl carrier protein (ACP). The sequence is that of Enoyl-[acyl-carrier-protein] reductase [NADH] from Coxiella burnetii (strain CbuK_Q154) (Coxiella burnetii (strain Q154)).